Here is a 166-residue protein sequence, read N- to C-terminus: NAD(P)H-quinone oxidoreductase subunit I, chloroplastic (166 aa).

4Fe-4S ferredoxin-type domains lie at 55 to 84 (GRIH…VDWK) and 95 to 124 (LNYS…MTEE). [4Fe-4S] cluster is bound by residues cysteine 64, cysteine 67, cysteine 70, cysteine 74, cysteine 104, cysteine 107, cysteine 110, and cysteine 114.

The protein belongs to the complex I 23 kDa subunit family. In terms of assembly, NDH is composed of at least 16 different subunits, 5 of which are encoded in the nucleus. [4Fe-4S] cluster is required as a cofactor.

The protein localises to the plastid. It localises to the chloroplast thylakoid membrane. The catalysed reaction is a plastoquinone + NADH + (n+1) H(+)(in) = a plastoquinol + NAD(+) + n H(+)(out). It catalyses the reaction a plastoquinone + NADPH + (n+1) H(+)(in) = a plastoquinol + NADP(+) + n H(+)(out). Its function is as follows. NDH shuttles electrons from NAD(P)H:plastoquinone, via FMN and iron-sulfur (Fe-S) centers, to quinones in the photosynthetic chain and possibly in a chloroplast respiratory chain. The immediate electron acceptor for the enzyme in this species is believed to be plastoquinone. Couples the redox reaction to proton translocation, and thus conserves the redox energy in a proton gradient. This is NAD(P)H-quinone oxidoreductase subunit I, chloroplastic from Acanthospermum australe (Paraguayan starburr).